The following is a 291-amino-acid chain: Pantothenate synthetase (291 aa).

30 to 37 (MGNLHEGH) contacts ATP. Histidine 37 (proton donor) is an active-site residue. Glutamine 61 provides a ligand contact to (R)-pantoate. Glutamine 61 contacts beta-alanine. 149-152 (GEKD) contributes to the ATP binding site. Glutamine 155 contacts (R)-pantoate. ATP contacts are provided by residues valine 178 and 186-189 (MSSR).

This sequence belongs to the pantothenate synthetase family. As to quaternary structure, homodimer.

Its subcellular location is the cytoplasm. It carries out the reaction (R)-pantoate + beta-alanine + ATP = (R)-pantothenate + AMP + diphosphate + H(+). It functions in the pathway cofactor biosynthesis; (R)-pantothenate biosynthesis; (R)-pantothenate from (R)-pantoate and beta-alanine: step 1/1. Its function is as follows. Catalyzes the condensation of pantoate with beta-alanine in an ATP-dependent reaction via a pantoyl-adenylate intermediate. The chain is Pantothenate synthetase from Aliivibrio fischeri (strain ATCC 700601 / ES114) (Vibrio fischeri).